A 262-amino-acid chain; its full sequence is Acyl-[acyl-carrier-protein]--UDP-N-acetylglucosamine O-acyltransferase (262 aa).

The protein belongs to the transferase hexapeptide repeat family. LpxA subfamily. As to quaternary structure, homotrimer.

It localises to the cytoplasm. The enzyme catalyses a (3R)-hydroxyacyl-[ACP] + UDP-N-acetyl-alpha-D-glucosamine = a UDP-3-O-[(3R)-3-hydroxyacyl]-N-acetyl-alpha-D-glucosamine + holo-[ACP]. It participates in glycolipid biosynthesis; lipid IV(A) biosynthesis; lipid IV(A) from (3R)-3-hydroxytetradecanoyl-[acyl-carrier-protein] and UDP-N-acetyl-alpha-D-glucosamine: step 1/6. Involved in the biosynthesis of lipid A, a phosphorylated glycolipid that anchors the lipopolysaccharide to the outer membrane of the cell. The sequence is that of Acyl-[acyl-carrier-protein]--UDP-N-acetylglucosamine O-acyltransferase from Burkholderia lata (strain ATCC 17760 / DSM 23089 / LMG 22485 / NCIMB 9086 / R18194 / 383).